Reading from the N-terminus, the 211-residue chain is FMN-dependent NADH:quinone oxidoreductase (211 aa).

Residues Ser-10 and Ser-16–Ser-18 each bind FMN.

This sequence belongs to the azoreductase type 1 family. As to quaternary structure, homodimer. The cofactor is FMN.

It catalyses the reaction 2 a quinone + NADH + H(+) = 2 a 1,4-benzosemiquinone + NAD(+). It carries out the reaction N,N-dimethyl-1,4-phenylenediamine + anthranilate + 2 NAD(+) = 2-(4-dimethylaminophenyl)diazenylbenzoate + 2 NADH + 2 H(+). Functionally, quinone reductase that provides resistance to thiol-specific stress caused by electrophilic quinones. Its function is as follows. Also exhibits azoreductase activity. Catalyzes the reductive cleavage of the azo bond in aromatic azo compounds to the corresponding amines. This Parafrankia sp. (strain EAN1pec) protein is FMN-dependent NADH:quinone oxidoreductase.